A 645-amino-acid chain; its full sequence is Sister chromatid cohesion protein 1 (645 aa).

Disordered regions lie at residues 292 to 311 (FEPE…FALE), 495 to 527 (QSGF…GQLE), and 619 to 645 (CPLS…MRPV).

The protein belongs to the rad21 family. In terms of assembly, component of the cohesin complex, composed of the smc-1 and smc-3 heterodimer attached via their hinge domain, scc-1 which links them, and scc-3. Interacts with smc-1, smc-3, scc-3 and tim-1.

It is found in the nucleus. The protein resides in the chromosome. It localises to the cytoplasm. Its function is as follows. Cleavable component of the cohesin complex involved in chromosome cohesion during cell cycle. The cohesin complex is required for the cohesion of sister chromatids after DNA replication. The cohesin complex apparently forms a large proteinaceous ring within which sister chromatids can be trapped. At metaphase-anaphase transition, this protein is cleaved and dissociates from chromatin, allowing sister chromatids to segregate. The chain is Sister chromatid cohesion protein 1 from Caenorhabditis elegans.